Here is an 86-residue protein sequence, read N- to C-terminus: Cytochrome c-555 (86 aa).

The heme c site is built by Cys14, Cys17, His18, and Met60.

In terms of processing, binds 1 heme c group covalently per subunit.

Its function is as follows. This basic c-type monoheme cytochrome has been found exclusively in the green photosynthetic bacteria, although its role in bacterial photosynthesis is not established. It has an unusually low redox potential compared with mitochondrial cytochrome c. It is reactive with cytochrome c oxidases but not with reductases. In Chlorobaculum thiosulfatiphilum (Chlorobium limicola f.sp. thiosulfatophilum), this protein is Cytochrome c-555.